Here is a 590-residue protein sequence, read N- to C-terminus: DNA mismatch repair protein MutL (590 aa).

It belongs to the DNA mismatch repair MutL/HexB family.

Its function is as follows. This protein is involved in the repair of mismatches in DNA. It is required for dam-dependent methyl-directed DNA mismatch repair. May act as a 'molecular matchmaker', a protein that promotes the formation of a stable complex between two or more DNA-binding proteins in an ATP-dependent manner without itself being part of a final effector complex. This is DNA mismatch repair protein MutL from Caldanaerobacter subterraneus subsp. tengcongensis (strain DSM 15242 / JCM 11007 / NBRC 100824 / MB4) (Thermoanaerobacter tengcongensis).